The primary structure comprises 1004 residues: Copper-transporting ATPase (1004 aa).

The Cytoplasmic portion of the chain corresponds to 1 to 262 (MREVILAVHG…FWKKNSIKST (262 aa)). 2 HMA domains span residues 2 to 67 (REVI…FDCE) and 80 to 146 (KEGL…FDSN). Cu(+)-binding residues include C13, C16, C91, and C94. The chain crosses the membrane as a helical span at residues 263–283 (LLAIICMLLYMIVPMMWPTIV). At 284-303 (QDRIFPYKETSFVRGLFYRD) the chain is on the lumenal, vesicle side. Residues 304-324 (ILGVILASYIQFSVGFYFYKA) traverse the membrane as a helical segment. The Cytoplasmic portion of the chain corresponds to 325-335 (AWASLKHGSGT). The helical transmembrane segment at 336-356 (MDTLVCVSTTCAYTFSVFSLV) threads the bilayer. At 357 to 370 (HNMFHPSSTGKLPR) the chain is on the lumenal, vesicle side. Residues 371 to 391 (IVFDTSIMIISYISIGKYLET) form a helical membrane-spanning segment. The Cytoplasmic segment spans residues 392-528 (LAKSQTSTAL…IQGYADYLAS (137 aa)). Residues 529-549 (IFVPGILILAVLTFFIWCFIL) form a helical membrane-spanning segment. Topologically, residues 550 to 577 (NISANPPVAFTANTKADNFFICLQTATS) are lumenal, vesicle. Residues 578–598 (VVIVACPCALGLATPTAIMVG) traverse the membrane as a helical segment. Topologically, residues 599-901 (TGVGAQNGVL…LKTFKRIKLN (303 aa)) are cytoplasmic. D627 (4-aspartylphosphate intermediate) is an active-site residue. The Mg(2+) site is built by D838 and D842. Residues 902 to 924 (LFWALCYNIFMIPIAMGVLIPWG) form a helical membrane-spanning segment. Residues 925-927 (ITL) lie on the Lumenal, vesicle side of the membrane. Residues 928-950 (PPMLAGLAMAFSSVSVVLSSLML) traverse the membrane as a helical segment. At 951–1004 (KKWTPPDIESHGISDFKSKFSIGNFWSRLFSTRAIAGEQDIESQAGLMSNEEVL) the chain is on the cytoplasmic side.

This sequence belongs to the cation transport ATPase (P-type) (TC 3.A.3) family. Type IB subfamily. Interacts with the copper chaperone ATX1 via the copper anion.

Its subcellular location is the golgi apparatus. The protein localises to the trans-Golgi network membrane. The enzyme catalyses Cu(+)(in) + ATP + H2O = Cu(+)(out) + ADP + phosphate + H(+). Its function is as follows. Copper-transporting P-type ATPase necessary for the proper uptake of iron. Required for export of copper from cytosol into extracytosolic compartment. Retrieves copper from the metallochaperone ATX1 and incorporates it into trans-Golgi vesicles where they are acquired by the cell-surface iron transporter FET3. Required the production of inositolphosphorylceramide D, probably by delivering copper to a yet to be identified enzyme. In Saccharomyces cerevisiae (strain ATCC 204508 / S288c) (Baker's yeast), this protein is Copper-transporting ATPase.